The primary structure comprises 196 residues: Carnitine operon protein CaiE (196 aa).

Residues 173–196 are disordered; the sequence is TQPLRQMEENRPRLQGTTDVTPKR. Polar residues predominate over residues 187 to 196; the sequence is QGTTDVTPKR.

Belongs to the transferase hexapeptide repeat family.

Its pathway is amine and polyamine metabolism; carnitine metabolism. Functionally, overproduction of CaiE stimulates the activity of CaiB and CaiD. This Escherichia coli O157:H7 protein is Carnitine operon protein CaiE.